An 874-amino-acid chain; its full sequence is Alanine--tRNA ligase (874 aa).

Residues His-562, His-566, Cys-664, and His-668 each contribute to the Zn(2+) site.

Belongs to the class-II aminoacyl-tRNA synthetase family. It depends on Zn(2+) as a cofactor.

The protein resides in the cytoplasm. It carries out the reaction tRNA(Ala) + L-alanine + ATP = L-alanyl-tRNA(Ala) + AMP + diphosphate. Catalyzes the attachment of alanine to tRNA(Ala) in a two-step reaction: alanine is first activated by ATP to form Ala-AMP and then transferred to the acceptor end of tRNA(Ala). Also edits incorrectly charged Ser-tRNA(Ala) and Gly-tRNA(Ala) via its editing domain. The polypeptide is Alanine--tRNA ligase (Shewanella putrefaciens (strain CN-32 / ATCC BAA-453)).